Consider the following 95-residue polypeptide: Co-chaperonin GroES (95 aa).

The protein belongs to the GroES chaperonin family. As to quaternary structure, heptamer of 7 subunits arranged in a ring. Interacts with the chaperonin GroEL.

The protein localises to the cytoplasm. Together with the chaperonin GroEL, plays an essential role in assisting protein folding. The GroEL-GroES system forms a nano-cage that allows encapsulation of the non-native substrate proteins and provides a physical environment optimized to promote and accelerate protein folding. GroES binds to the apical surface of the GroEL ring, thereby capping the opening of the GroEL channel. The protein is Co-chaperonin GroES of Zymomonas mobilis subsp. mobilis (strain ATCC 31821 / ZM4 / CP4).